The sequence spans 744 residues: MFNEIIKTVEWGGKTLELSTGKIARQADGAVTVKMGNSVLLCTAVTAAKAKEGIGFFPLTINYREMAYAAGKIPGGFFKREGKASDREVLVSRLIDRPIRPLFHPAFVNETFVTCTVLSYDPETPVDILAIIGASAALSLSPAPYLEIVAASKVGLINGEFFLHPTLDLLKTSQLDLVVAGTNDSVMMVESEAHLLSEEQMLAAVKFGFDSFQPVVNIIKELAAEAKKSKLEMQDLYPAELKNEIKKLFAKEIEQTFAIKSKQERSTNLELIPEKVLKHFADDIESKKYNNYQIESALKSVESDILRGNILQKNKRIDGRTTTDIRQITCEVGLLPCAHGSALFTRGETQSLVSSTFGTSLDEQIIDSLEGEYKERFMLNYIFPPYSVNEAMPMKAPGRREVGHGKLAWRAVNPVLPTKTQFPYSIRVVAETTESNGSSSMATVCGSSLALMYAGVPIKAPVAGIAMGLVKEDEKFAVLSDILGDEDYFGDMDFKVAGTSEGITALQMDIKIRGVNFEIMKIALEQARLGRLHILEQMNKVISKPNNEMSKNAPSTTTLKVDKDKIRDIIGPGGKVIKEICETSGAKIDISDDGTVSIYASDKDKLKVALDKVKAIAIEPEIGEVFNGTVMKILDSGAFVNYLGNKDGFVHISEIAEERIESVGSVLKQGDIVKVKLIGFDNKGKAKLTIKNAEKDKSSANPKPKNSPKEHQEPEKRDNGKKRAWNEDNNAETTEVVTERKYFS.

2 residues coordinate Mg(2+): Asp487 and Asp493. Residues 554-613 (PSTTTLKVDKDKIRDIIGPGGKVIKEICETSGAKIDISDDGTVSIYASDKDKLKVALDKV) enclose the KH domain. Residues 623–691 (GEVFNGTVMK…NKGKAKLTIK (69 aa)) enclose the S1 motif domain. Positions 691–744 (KNAEKDKSSANPKPKNSPKEHQEPEKRDNGKKRAWNEDNNAETTEVVTERKYFS) are disordered. Basic and acidic residues predominate over residues 707–718 (SPKEHQEPEKRD). Residues 727–736 (EDNNAETTEV) show a composition bias toward polar residues.

The protein belongs to the polyribonucleotide nucleotidyltransferase family. Mg(2+) serves as cofactor.

Its subcellular location is the cytoplasm. The catalysed reaction is RNA(n+1) + phosphate = RNA(n) + a ribonucleoside 5'-diphosphate. Involved in mRNA degradation. Catalyzes the phosphorolysis of single-stranded polyribonucleotides processively in the 3'- to 5'-direction. This is Polyribonucleotide nucleotidyltransferase from Rickettsia bellii (strain OSU 85-389).